We begin with the raw amino-acid sequence, 201 residues long: Lipoprotein signal peptidase (201 aa).

Helical transmembrane passes span 73-93 (SNAI…YLMI) and 97-117 (TIGS…NLID). Catalysis depends on residues Asp-126 and Asp-144. A helical transmembrane segment spans residues 135 to 155 (YSFPVFNLADCFIIIGVIILI).

It belongs to the peptidase A8 family.

Its subcellular location is the cell inner membrane. The enzyme catalyses Release of signal peptides from bacterial membrane prolipoproteins. Hydrolyzes -Xaa-Yaa-Zaa-|-(S,diacylglyceryl)Cys-, in which Xaa is hydrophobic (preferably Leu), and Yaa (Ala or Ser) and Zaa (Gly or Ala) have small, neutral side chains.. It participates in protein modification; lipoprotein biosynthesis (signal peptide cleavage). This protein specifically catalyzes the removal of signal peptides from prolipoproteins. In Rickettsia conorii (strain ATCC VR-613 / Malish 7), this protein is Lipoprotein signal peptidase.